Here is a 364-residue protein sequence, read N- to C-terminus: UDP-N-acetylglucosamine--N-acetylmuramyl-(pentapeptide) pyrophosphoryl-undecaprenol N-acetylglucosamine transferase (364 aa).

UDP-N-acetyl-alpha-D-glucosamine-binding positions include 10 to 12 (TGG), asparagine 126, arginine 167, serine 199, isoleucine 253, and glutamine 298.

This sequence belongs to the glycosyltransferase 28 family. MurG subfamily.

Its subcellular location is the cell inner membrane. The enzyme catalyses di-trans,octa-cis-undecaprenyl diphospho-N-acetyl-alpha-D-muramoyl-L-alanyl-D-glutamyl-meso-2,6-diaminopimeloyl-D-alanyl-D-alanine + UDP-N-acetyl-alpha-D-glucosamine = di-trans,octa-cis-undecaprenyl diphospho-[N-acetyl-alpha-D-glucosaminyl-(1-&gt;4)]-N-acetyl-alpha-D-muramoyl-L-alanyl-D-glutamyl-meso-2,6-diaminopimeloyl-D-alanyl-D-alanine + UDP + H(+). The protein operates within cell wall biogenesis; peptidoglycan biosynthesis. Functionally, cell wall formation. Catalyzes the transfer of a GlcNAc subunit on undecaprenyl-pyrophosphoryl-MurNAc-pentapeptide (lipid intermediate I) to form undecaprenyl-pyrophosphoryl-MurNAc-(pentapeptide)GlcNAc (lipid intermediate II). This is UDP-N-acetylglucosamine--N-acetylmuramyl-(pentapeptide) pyrophosphoryl-undecaprenol N-acetylglucosamine transferase from Amoebophilus asiaticus (strain 5a2).